Reading from the N-terminus, the 377-residue chain is Homocitrate synthase 1 (377 aa).

In terms of domain architecture, Pyruvate carboxyltransferase spans Val4–Leu255.

Belongs to the alpha-IPM synthase/homocitrate synthase family.

It catalyses the reaction acetyl-CoA + 2-oxoglutarate + H2O = (2R)-homocitrate + CoA + H(+). This protein is a Fe-Mo-cofactor biosynthetic component. The chain is Homocitrate synthase 1 (nifV1) from Nostoc sp. (strain PCC 7120 / SAG 25.82 / UTEX 2576).